The sequence spans 39 residues: MKLLIVLTCISLCSCICTVVQRCASNKPHVLEDPCKVQH.

An N-terminal signal peptide occupies residues 1 to 15 (MKLLIVLTCISLCSC). Residues 16–39 (ICTVVQRCASNKPHVLEDPCKVQH) enclose the SARS ORF8 Ig-like domain.

In Homo sapiens (Human), this protein is ORF8a protein.